A 179-amino-acid chain; its full sequence is Adenine phosphoribosyltransferase (179 aa).

Belongs to the purine/pyrimidine phosphoribosyltransferase family. In terms of assembly, homodimer.

Its subcellular location is the cytoplasm. It carries out the reaction AMP + diphosphate = 5-phospho-alpha-D-ribose 1-diphosphate + adenine. It functions in the pathway purine metabolism; AMP biosynthesis via salvage pathway; AMP from adenine: step 1/1. Functionally, catalyzes a salvage reaction resulting in the formation of AMP, that is energically less costly than de novo synthesis. The sequence is that of Adenine phosphoribosyltransferase from Bradyrhizobium diazoefficiens (strain JCM 10833 / BCRC 13528 / IAM 13628 / NBRC 14792 / USDA 110).